The chain runs to 220 residues: 7-cyano-7-deazaguanine synthase (220 aa).

ATP is bound at residue Ile-7–Ala-17. Zn(2+) is bound by residues Cys-187, Cys-195, Cys-198, and Cys-201.

It belongs to the QueC family. Zn(2+) is required as a cofactor.

It catalyses the reaction 7-carboxy-7-deazaguanine + NH4(+) + ATP = 7-cyano-7-deazaguanine + ADP + phosphate + H2O + H(+). It participates in purine metabolism; 7-cyano-7-deazaguanine biosynthesis. In terms of biological role, catalyzes the ATP-dependent conversion of 7-carboxy-7-deazaguanine (CDG) to 7-cyano-7-deazaguanine (preQ(0)). This Campylobacter hominis (strain ATCC BAA-381 / DSM 21671 / CCUG 45161 / LMG 19568 / NCTC 13146 / CH001A) protein is 7-cyano-7-deazaguanine synthase.